A 420-amino-acid polypeptide reads, in one-letter code: UDP-N-acetylglucosamine 1-carboxyvinyltransferase 2 (420 aa).

Position 22–23 (22–23 (KN)) interacts with phosphoenolpyruvate. Residue R92 participates in UDP-N-acetyl-alpha-D-glucosamine binding. The active-site Proton donor is the C116. 2-(S-cysteinyl)pyruvic acid O-phosphothioketal is present on C116. UDP-N-acetyl-alpha-D-glucosamine is bound by residues 121–125 (RPIDL), D307, and I329.

The protein belongs to the EPSP synthase family. MurA subfamily.

The protein localises to the cytoplasm. It carries out the reaction phosphoenolpyruvate + UDP-N-acetyl-alpha-D-glucosamine = UDP-N-acetyl-3-O-(1-carboxyvinyl)-alpha-D-glucosamine + phosphate. It functions in the pathway cell wall biogenesis; peptidoglycan biosynthesis. In terms of biological role, cell wall formation. Adds enolpyruvyl to UDP-N-acetylglucosamine. This Streptococcus thermophilus (strain CNRZ 1066) protein is UDP-N-acetylglucosamine 1-carboxyvinyltransferase 2.